An 864-amino-acid chain; its full sequence is Structure-specific endonuclease subunit SLX4 (864 aa).

Low complexity predominate over residues 35-54 (SPLSLPSPTSLLDFLSTSTS). Disordered regions lie at residues 35-72 (SPLS…GKEV), 89-113 (VVSG…PGNA), 160-193 (KANQ…HIND), 288-318 (GLSD…NPPK), 348-382 (LSDE…EKKN), 413-432 (ANGH…HISN), and 625-771 (KTSN…ETLP). The segment covering 58-72 (ARSDTDGDKTQGKEV) has biased composition (basic and acidic residues). Polar residues-rich tracts occupy residues 160 to 169 (KANQTVSLQP) and 289 to 306 (LSDS…SATS). Residues 307–317 (KPRRVKAKNPP) are compositionally biased toward basic residues. Residues 659–668 (SIPQTATTQV) are compositionally biased toward polar residues. A compositionally biased stretch (low complexity) spans 683 to 695 (VPVPSRRSTSTSK). Positions 743 to 771 (PESFNLPTTPLTIRSGKIPSTGTASETLP) are enriched in polar residues.

This sequence belongs to the SLX4 family. In terms of assembly, forms a heterodimer with SLX1. In terms of processing, phosphorylated in response to DNA damage.

The protein localises to the nucleus. Its function is as follows. Regulatory subunit of the SLX1-SLX4 structure-specific endonuclease that resolves DNA secondary structures generated during DNA repair and recombination. Has endonuclease activity towards branched DNA substrates, introducing single-strand cuts in duplex DNA close to junctions with ss-DNA. The protein is Structure-specific endonuclease subunit SLX4 of Paracoccidioides brasiliensis (strain Pb03).